Reading from the N-terminus, the 501-residue chain is Lysine--tRNA ligase (501 aa).

The Mg(2+) site is built by Glu410 and Glu417.

It belongs to the class-II aminoacyl-tRNA synthetase family. In terms of assembly, homodimer. Mg(2+) serves as cofactor.

It localises to the cytoplasm. The catalysed reaction is tRNA(Lys) + L-lysine + ATP = L-lysyl-tRNA(Lys) + AMP + diphosphate. This chain is Lysine--tRNA ligase, found in Shewanella pealeana (strain ATCC 700345 / ANG-SQ1).